Here is a 480-residue protein sequence, read N- to C-terminus: Speriolin (480 aa).

The necessary for targeting to centrosomes stretch occupies residues 1 to 76 (MSLLTSYEGL…HQGVFLPPAS (76 aa)). Residues 2 to 45 (SLLTSYEGLRHQIERLVRENEELKKLVRLIRENQELKSAIKTQA) are a coiled coil. Disordered regions lie at residues 252 to 297 (INNI…SRVM) and 305 to 324 (VEME…DNPR).

This sequence belongs to the speriolin family. In terms of assembly, found in a complex with CDC20, CDC27 and TUBG1. Interacts with CDC20. In terms of tissue distribution, expressed in testis. Expressed in pachyten spermatocytes, spermatids and epididymal sperm (at protein level).

The protein localises to the cytoplasm. It is found in the cytoskeleton. The protein resides in the microtubule organizing center. Its subcellular location is the centrosome. The protein is Speriolin (Spatc1) of Mus musculus (Mouse).